The following is a 473-amino-acid chain: UDP-glycosyltransferase 71B1 (473 aa).

The Proton acceptor role is filled by His15. His15 is an an anthocyanidin binding site. Residue Asp110 is the Charge relay of the active site. Thr132, Ala342, Gln344, His359, Trp362, Asn363, Ser364, and Glu367 together coordinate UDP-alpha-D-glucose. Position 382 (Ala382) interacts with an anthocyanidin. UDP-alpha-D-glucose-binding residues include Glu383 and Gln384.

This sequence belongs to the UDP-glycosyltransferase family.

The catalysed reaction is a flavonol + UDP-alpha-D-glucose = a flavonol 3-O-beta-D-glucoside + UDP + H(+). In terms of biological role, possesses quercetin 3-O-glucosyltransferase activity in vitro. Also active in vitro on benzoates and benzoate derivatives. This is UDP-glycosyltransferase 71B1 (UGT71B1) from Arabidopsis thaliana (Mouse-ear cress).